The chain runs to 1337 residues: DNA-directed RNA polymerase subunit beta' (1337 aa).

Residues cysteine 60, cysteine 62, cysteine 75, and cysteine 78 each coordinate Zn(2+). The Mg(2+) site is built by aspartate 536, aspartate 538, and aspartate 540. Residues cysteine 895, cysteine 974, cysteine 981, and cysteine 984 each coordinate Zn(2+).

This sequence belongs to the RNA polymerase beta' chain family. The RNAP catalytic core consists of 2 alpha, 1 beta, 1 beta' and 1 omega subunit. When a sigma factor is associated with the core the holoenzyme is formed, which can initiate transcription. Mg(2+) serves as cofactor. Zn(2+) is required as a cofactor.

It catalyses the reaction RNA(n) + a ribonucleoside 5'-triphosphate = RNA(n+1) + diphosphate. Its function is as follows. DNA-dependent RNA polymerase catalyzes the transcription of DNA into RNA using the four ribonucleoside triphosphates as substrates. The polypeptide is DNA-directed RNA polymerase subunit beta' (Bifidobacterium adolescentis (strain ATCC 15703 / DSM 20083 / NCTC 11814 / E194a)).